Consider the following 133-residue polypeptide: Nickel-responsive regulator (133 aa).

4 residues coordinate Ni(2+): His-76, His-87, His-89, and Cys-95.

This sequence belongs to the transcriptional regulatory CopG/NikR family. Homotetramer. It depends on Ni(2+) as a cofactor.

Functionally, transcriptional repressor of the nikABCDE operon. Is active in the presence of excessive concentrations of intracellular nickel. The protein is Nickel-responsive regulator of Enterobacter sp. (strain 638).